Here is a 488-residue protein sequence, read N- to C-terminus: Glutamyl-tRNA(Gln) amidotransferase subunit B, mitochondrial (488 aa).

This sequence belongs to the GatB/GatE family. GatB subfamily. Subunit of the heterotrimeric GatFAB amidotransferase (AdT) complex, composed of A, B and F subunits.

Its subcellular location is the mitochondrion. The catalysed reaction is L-glutamyl-tRNA(Gln) + L-glutamine + ATP + H2O = L-glutaminyl-tRNA(Gln) + L-glutamate + ADP + phosphate + H(+). In terms of biological role, allows the formation of correctly charged Gln-tRNA(Gln) through the transamidation of misacylated Glu-tRNA(Gln) in the mitochondria. The reaction takes place in the presence of glutamine and ATP through an activated gamma-phospho-Glu-tRNA(Gln). The protein is Glutamyl-tRNA(Gln) amidotransferase subunit B, mitochondrial of Candida albicans (strain SC5314 / ATCC MYA-2876) (Yeast).